The sequence spans 271 residues: Thiamine thiazole synthase (271 aa).

NAD(+) is bound by residues Ser39, 58-59, Gly66, Val130, and 158-160; these read ER and HVD. 2 residues coordinate Fe cation: Asp160 and His175. An NAD(+)-binding site is contributed by Met225. A glycine-binding site is contributed by Arg235.

This sequence belongs to the THI4 family. As to quaternary structure, homooctamer; tetramer of dimers. Fe(2+) serves as cofactor.

It catalyses the reaction hydrogen sulfide + glycine + NAD(+) = ADP-5-ethyl-4-methylthiazole-2-carboxylate + nicotinamide + 3 H2O + H(+). It participates in cofactor biosynthesis; thiamine diphosphate biosynthesis. Involved in the biosynthesis of the thiazole moiety of thiamine. Catalyzes the conversion of NAD and glycine to adenosine diphosphate 5-(2-hydroxyethyl)-4-methylthiazole-2-carboxylate (ADT), an adenylated thiazole intermediate, using free sulfide as a source of sulfur. In Metallosphaera sedula (strain ATCC 51363 / DSM 5348 / JCM 9185 / NBRC 15509 / TH2), this protein is Thiamine thiazole synthase.